A 435-amino-acid chain; its full sequence is Serine carboxypeptidase-like 12 (435 aa).

The first 21 residues, 1–21 (MKSTPKLLLLLLFIINHHVDS), serve as a signal peptide directing secretion. Intrachain disulfides connect C80–C323, C244–C258, and C282–C289. An N-linked (GlcNAc...) asparagine glycan is attached at N101. S176 is an active-site residue. N313, N336, and N344 each carry an N-linked (GlcNAc...) asparagine glycan. D360 is an active-site residue. N-linked (GlcNAc...) asparagine glycosylation occurs at N376. H413 is an active-site residue. N-linked (GlcNAc...) asparagine glycosylation occurs at N420.

It belongs to the peptidase S10 family. In terms of tissue distribution, expressed in roots.

It localises to the secreted. Its function is as follows. Probable carboxypeptidase. The polypeptide is Serine carboxypeptidase-like 12 (SCPL12) (Arabidopsis thaliana (Mouse-ear cress)).